The primary structure comprises 350 residues: Uroporphyrinogen decarboxylase (350 aa).

Residues 27–31 (RQAGR), F46, D76, Y152, S207, and H321 each bind substrate.

This sequence belongs to the uroporphyrinogen decarboxylase family. Homodimer.

It is found in the cytoplasm. The catalysed reaction is uroporphyrinogen III + 4 H(+) = coproporphyrinogen III + 4 CO2. It participates in porphyrin-containing compound metabolism; protoporphyrin-IX biosynthesis; coproporphyrinogen-III from 5-aminolevulinate: step 4/4. Catalyzes the decarboxylation of four acetate groups of uroporphyrinogen-III to yield coproporphyrinogen-III. In Listeria welshimeri serovar 6b (strain ATCC 35897 / DSM 20650 / CCUG 15529 / CIP 8149 / NCTC 11857 / SLCC 5334 / V8), this protein is Uroporphyrinogen decarboxylase.